A 140-amino-acid chain; its full sequence is MEPCAALPRALLLLLFLHLSPLGGRPHPLGGRSPASEASEASEASGLWAVQELLGRLKDAVSELQAEQLALEPLHRSHSPAEAPEAGGTPRGVLAPHDSVLQALRRLRSPKMMHKSGCFGRRLDRIGSLSGLGCNVLRKY.

Positions 1 to 26 (MEPCAALPRALLLLLFLHLSPLGGRP) are cleaved as a signal peptide. The segment at 71–94 (LEPLHRSHSPAEAPEAGGTPRGVL) is disordered. A disulfide bridge links Cys-118 with Cys-134.

Belongs to the natriuretic peptide family. Post-translationally, the precursor molecule is proteolytically cleaved by the endoproteases FURIN or CORIN at Arg-108 to produce the brain natriuretic peptide 32. CORIN also cleaves the precursor molecule at additional residues including Arg-105, Arg-108 and possibly Lys-111. In terms of processing, undergoes further proteolytic cleavage by various proteases such as DPP4, MME and possibly FAP, to give rise to a variety of shorter peptides. Cleaved at Pro-110 by the prolyl endopeptidase FAP (seprase) activity (in vitro). Degraded by IDE. During IDE degradation, the resulting products initially increase the activation of NPR1 and can also stimulate NPR2 to produce cGMP before the fragments are completely degraded and inactivated by IDE (in vitro). As to expression, brain and also in atria, but at much lower levels than ANP.

It is found in the secreted. In terms of biological role, cardiac hormone that plays a key role in mediating cardio-renal homeostasis. May also function as a paracrine antifibrotic factor in the heart. Acts by specifically binding and stimulating NPR1 to produce cGMP, which in turn activates effector proteins that drive various biological responses. Involved in regulating the extracellular fluid volume and maintaining the fluid-electrolyte balance through natriuresis, diuresis, vasorelaxation, and inhibition of renin and aldosterone secretion. Binds the clearance receptor NPR3. Functionally, may affect cardio-renal homeostasis. Able to promote the production of cGMP although its potency is very low compared to brain natriuretic peptide 32. This Canis lupus familiaris (Dog) protein is Natriuretic peptides B (NPPB).